Here is a 101-residue protein sequence, read N- to C-terminus: Large ribosomal subunit protein P1 (101 aa).

Over residues A61–A72 the composition is skewed to low complexity. Residues A61 to G101 are disordered. Positions E73 to A92 are enriched in acidic residues.

Belongs to the eukaryotic ribosomal protein P1/P2 family. As to quaternary structure, part of the 50S ribosomal subunit. Homodimer, it forms part of the ribosomal stalk which helps the ribosome interact with GTP-bound translation factors. Forms a heptameric uL10/P0(P1)2(P1)2(P1)2 complex, where uL10/P0 forms an elongated spine to which the P1 dimers bind in a sequential fashion.

In terms of biological role, forms part of the ribosomal stalk, playing a central role in the interaction of the ribosome with GTP-bound translation factors. The polypeptide is Large ribosomal subunit protein P1 (Methanothermobacter thermautotrophicus (strain ATCC 29096 / DSM 1053 / JCM 10044 / NBRC 100330 / Delta H) (Methanobacterium thermoautotrophicum)).